A 688-amino-acid chain; its full sequence is PTS system glucoside-specific EIICBA component (688 aa).

Positions 3 to 427 (KKLFGQLQRI…FKLKTPGRED (425 aa)) constitute a PTS EIIC type-1 domain. Transmembrane regions (helical) follow at residues 12 to 32 (IGKA…LLAF), 81 to 101 (LGLA…YLIM), 137 to 157 (LVLG…MGAL), 182 to 202 (FVPI…SFAW), 223 to 243 (LTTF…LHHI), 284 to 304 (AFTT…AFAI), 315 to 335 (VVGG…ITEP), 340 to 360 (FLFV…TSFL), 364 to 384 (LLGV…ILYG), and 395 to 415 (LVIP…DFAI). Residues 438–519 (AKLPFDVLDA…AKIMSGEITK (82 aa)) enclose the PTS EIIB type-1 domain. Cys-460 serves as the catalytic Phosphocysteine intermediate; for EIIB activity. The PTS EIIA type-1 domain occupies 560–664 (DQVFAGKMMG…SIVTPMIITN (105 aa)). His-612 serves as the catalytic Tele-phosphohistidine intermediate; for EIIA activity.

It localises to the cell membrane. Its function is as follows. The phosphoenolpyruvate-dependent sugar phosphotransferase system (sugar PTS), a major carbohydrate active -transport system, catalyzes the phosphorylation of incoming sugar substrates concomitantly with their translocation across the cell membrane. This system is involved in alpha- and beta-glucoside transport. The sequence is that of PTS system glucoside-specific EIICBA component (glcB) from Staphylococcus aureus (strain JH1).